A 994-amino-acid chain; its full sequence is Sarcoplasmic/endoplasmic reticulum calcium ATPase 1 (994 aa).

Residues 1-48 lie on the Cytoplasmic side of the membrane; the sequence is MENAHAKTAEECLAFFGVNESVGLSGEQVRRALEKYGHNELPAEEGKT. Residues 49–69 traverse the membrane as a helical segment; it reads IWELVVEQFEDLLVRILLLAA. At 70–89 the chain is on the lumenal side; the sequence is CISFVLAWFEEGEETITAFV. A helical transmembrane segment spans residues 90-110; the sequence is EPFVILLILIANAVVGVWQER. Topologically, residues 111–253 are cytoplasmic; sequence NAENAIEALK…QDKTPLQQKL (143 aa). A helical transmembrane segment spans residues 254 to 273; it reads DEFGEQLSKVISLICVAVWL. Over 274-295 the chain is Lumenal; that stretch reads INIGHFNDPVHGGSWIRGAIYY. The helical transmembrane segment at 296–313 threads the bilayer; the sequence is FKIAVALAVAAIPEGLPA. Positions 304, 305, 307, and 309 each coordinate Ca(2+). Residues 314 to 757 are Cytoplasmic-facing; it reads VITTCLALGT…EEGRAIYNNM (444 aa). The 4-aspartylphosphate intermediate role is filled by aspartate 351. Mg(2+) contacts are provided by aspartate 351 and threonine 353. Threonine 353, glutamate 442, arginine 489, lysine 515, arginine 560, threonine 625, glycine 626, aspartate 627, arginine 678, and lysine 684 together coordinate ATP. Aspartate 703 lines the Mg(2+) pocket. Asparagine 706 contacts ATP. The chain crosses the membrane as a helical span at residues 758–777; it reads KQFIRYLISSNVGEVVCIFL. Residues asparagine 768 and glutamate 771 each coordinate Ca(2+). Residues 778–787 lie on the Lumenal side of the membrane; the sequence is TAALGLPEAL. Residues 788 to 808 form a helical membrane-spanning segment; that stretch reads IPVQLLWVNLVTDGLPATALG. Residues 788–808 form an interaction with PLN region; sequence IPVQLLWVNLVTDGLPATALG. Asparagine 796, threonine 799, and aspartate 800 together coordinate Ca(2+). Residues 809–828 lie on the Cytoplasmic side of the membrane; sequence FNPPDLDIMDKPPRSPKEPL. Residues 829–851 traverse the membrane as a helical segment; that stretch reads ISGWLFFRYLAIGGYVGAATVGA. Over 852-897 the chain is Lumenal; the sequence is AAWWFLYAEDGPSLTYHQLTHFMQCTHHNAEFEGVDCDIFESPVPM. Cysteine 876 and cysteine 888 are disulfide-bonded. The chain crosses the membrane as a helical span at residues 898-917; sequence TMALSVLVTIEMCNALNSLS. Glutamate 908 lines the Ca(2+) pocket. Residues 918–930 lie on the Cytoplasmic side of the membrane; it reads ENQSLLRMPPWVN. The helical transmembrane segment at 931-949 threads the bilayer; sequence IWLVGSICLSMSLHFVILY. The tract at residues 932–943 is interaction with PLN; the sequence is WLVGSICLSMSL. Residues 950 to 964 lie on the Lumenal side of the membrane; sequence VDPLPMIFKLTHLDL. A helical transmembrane segment spans residues 965–985; sequence AHWLVVLRISFPVILLDEALK. Residues 986 to 994 are Cytoplasmic-facing; that stretch reads FVARNYLEA.

The protein belongs to the cation transport ATPase (P-type) (TC 3.A.3) family. Type IIA subfamily. Interacts with sarcolipin (SLN). Interacts with phospholamban (PLN). Interacts with myoregulin (MRLN). Interacts with DWORF. The cofactor is Mg(2+).

It is found in the endoplasmic reticulum membrane. It localises to the sarcoplasmic reticulum membrane. It catalyses the reaction Ca(2+)(in) + ATP + H2O = Ca(2+)(out) + ADP + phosphate + H(+). Its activity is regulated as follows. Inhibited by sarcolipin (SLN) and myoregulin (MRLN). Also shown to be inhibited by phospholamban (PLN) in vitro. Enhanced by DWORF; DWORF increases activity by displacing sarcolipin (SLN), phospholamban (PLN) and myoregulin (MRLN). Its function is as follows. Key regulator of striated muscle performance by acting as the major Ca(2+) ATPase responsible for the reuptake of cytosolic Ca(2+) into the sarcoplasmic reticulum. Catalyzes the hydrolysis of ATP coupled with the translocation of calcium from the cytosol to the sarcoplasmic reticulum lumen. Contributes to calcium sequestration involved in muscular excitation/contraction. The polypeptide is Sarcoplasmic/endoplasmic reticulum calcium ATPase 1 (ATP2A1) (Gallus gallus (Chicken)).